Here is a 320-residue protein sequence, read N- to C-terminus: MQTRNAFSWLKKQITRSISVSLMIYILTRTSISSAYPIFAQQGYENPREATGRIVCANCHLANKPVEIEVPQAVLPDTVFEAVVRIPYDMQLKQVLANGKRGGLNVGAVLILPEGFELAPPDRISPEMKEKIGNLSFQSYRPNKKNILVIGPVPGQKYSEITFPILSPDPATKKDVRFLKYPIYVGGNRGRGQIYPDGSKSNNTVYNATAAGIVSKIIRKEKGGYEITIADASDGRQVVDIIPPGPELLVSEGESIKFDQPLTSNPNVGGFGQGDAEIVFQDPLRAQGLLFFLASVILAQIFLVLKKKQFEKVQLAEMNF.

The signal sequence occupies residues 1-35; sequence MQTRNAFSWLKKQITRSISVSLMIYILTRTSISSA. Residues tyrosine 36, cysteine 56, cysteine 59, and histidine 60 each contribute to the heme site. Residues 286–306 form a helical membrane-spanning segment; that stretch reads AQGLLFFLASVILAQIFLVLK.

This sequence belongs to the cytochrome f family. The 4 large subunits of the cytochrome b6-f complex are cytochrome b6, subunit IV (17 kDa polypeptide, petD), cytochrome f and the Rieske protein, while the 4 small subunits are PetG, PetL, PetM and PetN. The complex functions as a dimer. It depends on heme as a cofactor.

The protein localises to the plastid. The protein resides in the chloroplast thylakoid membrane. Component of the cytochrome b6-f complex, which mediates electron transfer between photosystem II (PSII) and photosystem I (PSI), cyclic electron flow around PSI, and state transitions. In Nicotiana tomentosiformis (Tobacco), this protein is Cytochrome f.